Reading from the N-terminus, the 88-residue chain is Molybdopterin synthase sulfur carrier subunit (88 aa).

At Gly-88 the chain carries 1-thioglycine; alternate. At Gly-88 the chain carries Glycyl adenylate; alternate.

The protein belongs to the MoaD family. MOCS2A subfamily. Heterotetramer; composed of 2 small (MOCS2A) and 2 large (MOCS2B) subunits. C-terminal thiocarboxylation occurs in 2 steps, it is first acyl-adenylated (-COAMP) via the hesA/moeB/thiF part of uba4, then thiocarboxylated (-COSH) via the rhodanese domain of uba4.

The protein resides in the cytoplasm. The protein operates within cofactor biosynthesis; molybdopterin biosynthesis. Functionally, acts as a sulfur carrier required for molybdopterin biosynthesis. Component of the molybdopterin synthase complex that catalyzes the conversion of precursor Z into molybdopterin by mediating the incorporation of 2 sulfur atoms into precursor Z to generate a dithiolene group. In the complex, serves as sulfur donor by being thiocarboxylated (-COSH) at its C-terminus by uba4. After interaction with MOCS2B, the sulfur is then transferred to precursor Z to form molybdopterin. The protein is Molybdopterin synthase sulfur carrier subunit of Aspergillus niger (strain ATCC MYA-4892 / CBS 513.88 / FGSC A1513).